Here is a 404-residue protein sequence, read N- to C-terminus: MLMSVFHNWLLEIACENYFVYIKRLSANDTGATGGHQVGLYIPSGIVEKLFPSINHTRELNPSVFLTAHVSSHDCPDSEARAIYYNSRHFGKTRNEKRITRWVEAAHFRILKITGALTLLAFKLDEQGGDCKEVNIWVCASTDEEDVIETAIGEVIPGALISGPAGQILGGLSLQQAPVNHKYILPEDWHLRFPSGSEIIQYAASHYVKNSLDPDEQLLDRRRVEYDIFLLVEELHVLDIIRKGFGSVDEFIALANSVSNRRKSRAGKSLELHLEHLFIEHGLRHFATQAITEGNKKPDFLFPSAGAYHDTEFPVENLRMLAVKTTCKDRWRQILNEADKIHQVHLFTLQEGVSLAQYREMRESGVRLVVPSSLHKKYPEAVRAELMTLGAFIAELTGLYADIP.

Y308 is a catalytic residue.

In terms of assembly, homodimer. Mg(2+) is required as a cofactor.

The enzyme catalyses Endonucleolytic cleavage of DNA to give specific double-stranded fragments with terminal 5'-phosphates.. Functionally, an E and P subtype restriction enzyme that recognizes the double-stranded sequence 5'-CCWGG-3' and cleaves before C-1. The polypeptide is Type II restriction enzyme EcoRII (ecoRIIR) (Escherichia coli).